Consider the following 388-residue polypeptide: STE20-related kinase adapter protein strd-1 (388 aa).

The Protein kinase domain maps to 52-335; it reads YDCVRYMGTC…ASDLKSSAWL (284 aa). ATP-binding positions include 58 to 66 and lysine 82; that span reads MGTCNGGQI.

Belongs to the protein kinase superfamily. STE Ser/Thr protein kinase family. STE20 subfamily. As to quaternary structure, interacts with sad-1. Interacts with par-4. As to expression, expressed in nervous system, pharynx and excretory canal. Expressed in germline.

Its subcellular location is the perikaryon. It localises to the nucleus. The protein localises to the cell projection. It is found in the dendrite. The protein resides in the axon. Its subcellular location is the synapse. It localises to the cytoplasm. The protein localises to the cell cortex. Pseudokinase which may act as an adapter for kinases sad-1 and par-4 and thereby is involved in several developmental processes. Regulates cell-autonomously both neuronal polarity and synaptic organization when bound to sad-1. Required for sad-1 localization to synapses. Required to establish germline stem cell (GSC) quiescence during dauer development, to promote cell shedding during embryogenesis and to control asymmetric cell division of the Q.p neuroblast lineage, probably when bound to par-4. May be involved in maintaining the integrity of the early embryonic cortex when bound to par-4. The polypeptide is STE20-related kinase adapter protein strd-1 (Caenorhabditis elegans).